The primary structure comprises 347 residues: S-adenosylmethionine:tRNA ribosyltransferase-isomerase (347 aa).

It belongs to the QueA family. As to quaternary structure, monomer.

It is found in the cytoplasm. The catalysed reaction is 7-aminomethyl-7-carbaguanosine(34) in tRNA + S-adenosyl-L-methionine = epoxyqueuosine(34) in tRNA + adenine + L-methionine + 2 H(+). The protein operates within tRNA modification; tRNA-queuosine biosynthesis. Its function is as follows. Transfers and isomerizes the ribose moiety from AdoMet to the 7-aminomethyl group of 7-deazaguanine (preQ1-tRNA) to give epoxyqueuosine (oQ-tRNA). In Xylella fastidiosa (strain 9a5c), this protein is S-adenosylmethionine:tRNA ribosyltransferase-isomerase.